We begin with the raw amino-acid sequence, 101 residues long: MAKKSKIARDAQRRAVVARYAQRRAELKRIIAAPGSSPEERAAAQQELRRQPRDASATRLRNRDAVDGRPRGYFRKFGLSRVRLRQLAHSGELPGVTKSSW.

The segment at 31–69 is disordered; it reads IAAPGSSPEERAAAQQELRRQPRDASATRLRNRDAVDGR. The span at 38 to 53 shows a compositional bias: basic and acidic residues; it reads PEERAAAQQELRRQPR.

It belongs to the universal ribosomal protein uS14 family. As to quaternary structure, part of the 30S ribosomal subunit. Contacts proteins S3 and S10.

Functionally, binds 16S rRNA, required for the assembly of 30S particles and may also be responsible for determining the conformation of the 16S rRNA at the A site. This chain is Small ribosomal subunit protein uS14A, found in Saccharopolyspora erythraea (strain ATCC 11635 / DSM 40517 / JCM 4748 / NBRC 13426 / NCIMB 8594 / NRRL 2338).